Here is an 87-residue protein sequence, read N- to C-terminus: FXYD domain-containing ion transport regulator 3 (87 aa).

An N-terminal signal peptide occupies residues Met1–Ala20. At Asn21–Gln38 the chain is on the extracellular side. The chain crosses the membrane as a helical span at residues Val39–Ala59. Residues Lys60–Ser87 lie on the Cytoplasmic side of the membrane. The disordered stretch occupies residues Gly66–Ser87.

Belongs to the FXYD family. Regulatory subunit of the sodium/potassium-transporting ATPase which is composed of a catalytic alpha subunit, a non-catalytic beta subunit and an additional regulatory subunit. Interacts with catalytic alpha subunit ATP1A1. Also interacts with non-catalytic beta subunit ATP1B1. Interacts with the ATP1A1-ATP1B1, ATP1A2-ATP1B1 and ATP1A3-ATP1B1 NKA isozymes. Post-translationally, glutathionylated. As to expression, isoform 1: Expressed mainly in differentiated cells (at protein level). Isoform 2: Expressed mainly in undifferentiated cells (at protein level).

The protein resides in the cell membrane. In terms of biological role, associates with and regulates the activity of the sodium/potassium-transporting ATPase (NKA) which transports Na(+) out of the cell and K(+) into the cell. Reduces glutathionylation of the NKA beta-1 subunit ATP1B1, thus reversing glutathionylation-mediated inhibition of ATP1B1. Induces a hyperpolarization-activated chloride current when expressed in Xenopus oocytes. Decreases the apparent K+ and Na+ affinity of the sodium/potassium-transporting ATPase over a large range of membrane potentials. Functionally, decreases the apparent K+ affinity of the sodium/potassium-transporting ATPase only at slightly negative and positive membrane potentials and increases the apparent Na+ affinity over a large range of membrane potentials. In Homo sapiens (Human), this protein is FXYD domain-containing ion transport regulator 3 (FXYD3).